The chain runs to 520 residues: Biotinidase (520 aa).

A signal peptide spans 1-21 (MSGARTAPALFFLGCSALALG). Residues 49 to 333 (NPLELVSRQE…TGNTTSEMDP (285 aa)) enclose the CN hydrolase domain. Residue E89 is the Proton acceptor of the active site. N-linked (GlcNAc...) asparagine glycosylation is found at N96, N127, and N180. K189 (proton donor) is an active-site residue. Residue C222 is the Nucleophile of the active site. N-linked (GlcNAc...) asparagine glycosylation is found at N326, N379, and N466.

Belongs to the carbon-nitrogen hydrolase superfamily. BTD/VNN family.

The protein localises to the secreted. It localises to the extracellular space. It catalyses the reaction biocytin + H2O = biotin + L-lysine. The enzyme catalyses biotin amide + H2O = biotin + NH4(+). In terms of biological role, catalytic release of biotin from biocytin, the product of biotin-dependent carboxylases degradation. This Mus musculus (Mouse) protein is Biotinidase (Btd).